The primary structure comprises 246 residues: MTNNTQRPSGRQADQLRDVRITRHYTKHAEGSVLVEFGDTKVICTASIAESVPSFLRDRGQGWLTAEYGMLPRATHTRSDREAARGKQTGRTQEIQRLIGRALRSVFDLEKLGARTLHIDCDVIQADGGTRTASITGAFVAAHDAVARLLATGRIESSPITDYVAAISVGVYDGLPVLDLDYDEDSQCDTDMNVVMTGAGGFVEIQGTAEGVPFSRDEMNALLDLASDGINTLIAKQKAALEQKGE.

Residues R91 and 129–131 (GTR) contribute to the phosphate site.

Belongs to the RNase PH family. In terms of assembly, homohexameric ring arranged as a trimer of dimers.

The enzyme catalyses tRNA(n+1) + phosphate = tRNA(n) + a ribonucleoside 5'-diphosphate. Phosphorolytic 3'-5' exoribonuclease that plays an important role in tRNA 3'-end maturation. Removes nucleotide residues following the 3'-CCA terminus of tRNAs; can also add nucleotides to the ends of RNA molecules by using nucleoside diphosphates as substrates, but this may not be physiologically important. Probably plays a role in initiation of 16S rRNA degradation (leading to ribosome degradation) during starvation. In Paraburkholderia xenovorans (strain LB400), this protein is Ribonuclease PH.